Here is a 430-residue protein sequence, read N- to C-terminus: Trigger factor (430 aa).

Residues 163-248 (GDTAVFDFAG…LHEVKTKQVP (86 aa)) enclose the PPIase FKBP-type domain.

This sequence belongs to the FKBP-type PPIase family. Tig subfamily.

It localises to the cytoplasm. It carries out the reaction [protein]-peptidylproline (omega=180) = [protein]-peptidylproline (omega=0). Functionally, involved in protein export. Acts as a chaperone by maintaining the newly synthesized protein in an open conformation. Functions as a peptidyl-prolyl cis-trans isomerase. This Exiguobacterium sp. (strain ATCC BAA-1283 / AT1b) protein is Trigger factor.